Here is a 261-residue protein sequence, read N- to C-terminus: Cytochrome c oxidase subunit 3 (261 aa).

Topologically, residues 1–15 are mitochondrial matrix; the sequence is MTHQTHAYHMVDPSP. A helical membrane pass occupies residues 16–34; that stretch reads WPLTGALSALLMTSGLTMW. The Mitochondrial intermembrane portion of the chain corresponds to 35–40; that stretch reads FHYHSV. Residues 41 to 66 traverse the membrane as a helical segment; the sequence is TLLLLGLTTNILTMFQWWRDVVREGT. Over 67 to 72 the chain is Mitochondrial matrix; it reads FQGHHT. The chain crosses the membrane as a helical span at residues 73 to 105; sequence PVVQESLRYGMILFITSEVLFFTGFFWAFYHSS. The Mitochondrial intermembrane segment spans residues 106–128; the sequence is LAPTPELGSYWPPVGVYPLNPLE. A helical transmembrane segment spans residues 129-152; it reads VPLLNTSVLLASGVTITWAHHSLM. The Mitochondrial matrix portion of the chain corresponds to 153 to 155; the sequence is EGN. The helical transmembrane segment at 156–183 threads the bilayer; the sequence is RKNMLQALLITILLGVYFTLLQMFEYYE. The Mitochondrial intermembrane portion of the chain corresponds to 184–190; the sequence is ASFTISD. The chain crosses the membrane as a helical span at residues 191-223; sequence GIYGSTFFVTTGFHGLHVIIGSTFLLTCFIRQL. Over 224–232 the chain is Mitochondrial matrix; sequence KFHFTSNHH. The helical transmembrane segment at 233–256 threads the bilayer; the sequence is FGFEAAAWYWHFVDVVWLFLYLSI. Residues 257 to 261 are Mitochondrial intermembrane-facing; the sequence is YWWGS.

This sequence belongs to the cytochrome c oxidase subunit 3 family. As to quaternary structure, component of the cytochrome c oxidase (complex IV, CIV), a multisubunit enzyme composed of 14 subunits. The complex is composed of a catalytic core of 3 subunits MT-CO1, MT-CO2 and MT-CO3, encoded in the mitochondrial DNA, and 11 supernumerary subunits COX4I, COX5A, COX5B, COX6A, COX6B, COX6C, COX7A, COX7B, COX7C, COX8 and NDUFA4, which are encoded in the nuclear genome. The complex exists as a monomer or a dimer and forms supercomplexes (SCs) in the inner mitochondrial membrane with NADH-ubiquinone oxidoreductase (complex I, CI) and ubiquinol-cytochrome c oxidoreductase (cytochrome b-c1 complex, complex III, CIII), resulting in different assemblies (supercomplex SCI(1)III(2)IV(1) and megacomplex MCI(2)III(2)IV(2)).

It is found in the mitochondrion inner membrane. The catalysed reaction is 4 Fe(II)-[cytochrome c] + O2 + 8 H(+)(in) = 4 Fe(III)-[cytochrome c] + 2 H2O + 4 H(+)(out). Its function is as follows. Component of the cytochrome c oxidase, the last enzyme in the mitochondrial electron transport chain which drives oxidative phosphorylation. The respiratory chain contains 3 multisubunit complexes succinate dehydrogenase (complex II, CII), ubiquinol-cytochrome c oxidoreductase (cytochrome b-c1 complex, complex III, CIII) and cytochrome c oxidase (complex IV, CIV), that cooperate to transfer electrons derived from NADH and succinate to molecular oxygen, creating an electrochemical gradient over the inner membrane that drives transmembrane transport and the ATP synthase. Cytochrome c oxidase is the component of the respiratory chain that catalyzes the reduction of oxygen to water. Electrons originating from reduced cytochrome c in the intermembrane space (IMS) are transferred via the dinuclear copper A center (CU(A)) of subunit 2 and heme A of subunit 1 to the active site in subunit 1, a binuclear center (BNC) formed by heme A3 and copper B (CU(B)). The BNC reduces molecular oxygen to 2 water molecules using 4 electrons from cytochrome c in the IMS and 4 protons from the mitochondrial matrix. The chain is Cytochrome c oxidase subunit 3 (MT-CO3) from Loxodonta africana (African elephant).